The following is a 428-amino-acid chain: Dihydroorotase (428 aa).

Zn(2+) is bound by residues His59 and His61. Residues 61–63 (HLR) and Asn93 contribute to the substrate site. Asp151, His178, and His231 together coordinate Zn(2+). Asn277 provides a ligand contact to substrate. Asp304 contacts Zn(2+). The active site involves Asp304. Substrate contacts are provided by residues His308 and 322–323 (FG).

This sequence belongs to the metallo-dependent hydrolases superfamily. DHOase family. Class I DHOase subfamily. Requires Zn(2+) as cofactor.

The enzyme catalyses (S)-dihydroorotate + H2O = N-carbamoyl-L-aspartate + H(+). The protein operates within pyrimidine metabolism; UMP biosynthesis via de novo pathway; (S)-dihydroorotate from bicarbonate: step 3/3. Its function is as follows. Catalyzes the reversible cyclization of carbamoyl aspartate to dihydroorotate. The polypeptide is Dihydroorotase (Bacillus cereus (strain ZK / E33L)).